Here is a 737-residue protein sequence, read N- to C-terminus: MATANSIIVLDDDDEDEAAAQPGPSHPPPNPASPQAEAPGSSQPHGAGGSSSSGGKKCYKLENEKLFEEFLELCKMQTADHPEVVPFLYNRQQRAHSLFLASAEFCNILSRVLSRAQSRPAKLYVYINELCTVLKAHSAKKKLNLAPAATSSEPSGNNPPTDPSSDPTNAETTASEAPRTRGSRRQIQRLEQLLALYVAEIRRLQEKELDLSELDDPDSTYLQEARLKRKLIRLFGRLCELKDCSSLTGRVIEQRIPYRGTRYPEVNRRIERLINKPGPDTFPDYGDVLRAVEKAAARHSLGLPRQQLQLMAQDAFRDVGIRLQERRHLDLIYNFGCHLTDDYRPGIDPALSDPALARRLRENRSLAMSRLDEVISKYAMMQDKSEEGERQKRRARLPQATSSHSTDPLKASLDSGEGPSGMASQECPTTSKPETDDEEDEESEEEEEEEEEEEEEEATDSEEEEDLEQMQEGQGDDEEEEEEEEEAGQDGDKSPMSPPRISTEKNLEPSKGISRSMGEQQNKEFTVSPSSEEPLAPSSIDAESNGENLEELLLEEESPISQLFELEIEALPLDTTPSPEERDISSSRKQSEEPLTTVLENGAAMVTSTSFNGGVSPHTWGDSCPPCKKSRKEKETGAEPLGNSYVERQRSVHEKNGRKIPTLPSPPSPLTSMAPVADSSTRVDSPSHGLVTSSLCSASQARLSQTPHSQPSRPGTYKMSVATQCDPEEIIVLSDSD.

Positions 1–55 (MATANSIIVLDDDDEDEAAAQPGPSHPPPNPASPQAEAPGSSQPHGAGGSSSSGG) are disordered. The interval 1 to 159 (MATANSIIVL…TSSEPSGNNP (159 aa)) is necessary for interaction with USP7 and ATRX. Phosphoserine is present on serine 25. Residues 33 to 45 (SPQAEAPGSSQPH) show a composition bias toward low complexity. Lysine 142 is covalently cross-linked (Glycyl lysine isopeptide (Lys-Gly) (interchain with G-Cter in SUMO2)). A disordered region spans residues 145–184 (LAPAATSSEPSGNNPPTDPSSDPTNAETTASEAPRTRGSR). The span at 149–175 (ATSSEPSGNNPPTDPSSDPTNAETTAS) shows a compositional bias: polar residues. Positions 179–216 (RTRGSRRQIQRLEQLLALYVAEIRRLQEKELDLSELDD) form a coiled coil. Residues 182–417 (GSRRQIQRLE…PLKASLDSGE (236 aa)) form an interaction with histone H3.3 region. Position 212 is a phosphoserine (serine 212). Positions 346–567 (GIDPALSDPA…SPISQLFELE (222 aa)) are necessary for interaction with USP7. Positions 382–556 (QDKSEEGERQ…ENLEELLLEE (175 aa)) are disordered. The short motif at 390–394 (RQKRR) is the Nuclear localization signal element. Serine 412 and serine 424 each carry phosphoserine. Polar residues predominate over residues 422–432 (MASQECPTTSK). The stretch at 432-474 (KPETDDEEDEESEEEEEEEEEEEEEEATDSEEEEDLEQMQEGQ) forms a coiled coil. Residues 435–489 (TDDEEDEESEEEEEEEEEEEEEEATDSEEEEDLEQMQEGQGDDEEEEEEEEEAGQ) are compositionally biased toward acidic residues. At threonine 459 the chain carries Phosphothreonine. Residues serine 494 and serine 497 each carry the phosphoserine modification. Position 511 is an N6-acetyllysine (lysine 511). Polar residues predominate over residues 517-527 (MGEQQNKEFTV). Residues 528 to 547 (SPSSEEPLAPSSIDAESNGE) are compositionally biased toward low complexity. Phosphoserine occurs at positions 558 and 578. The disordered stretch occupies residues 569 to 719 (EALPLDTTPS…QPSRPGTYKM (151 aa)). Basic and acidic residues predominate over residues 579–592 (PEERDISSSRKQSE). Residues 624–737 (CPPCKKSRKE…EEIIVLSDSD (114 aa)) are interaction with SPOP. The short motif at 626–632 (PCKKSRK) is the Nuclear localization signal element. Glycyl lysine isopeptide (Lys-Gly) (interchain with G-Cter in SUMO1) cross-links involve residues lysine 628 and lysine 629. Positions 647 to 657 (ERQRSVHEKNG) are enriched in basic and acidic residues. Residues serine 665, serine 668, serine 685, serine 699, serine 734, and serine 736 each carry the phosphoserine modification. Over residues 678 to 713 (DSSTRVDSPSHGLVTSSLCSASQARLSQTPHSQPSR) the composition is skewed to polar residues. A sumo interaction motif (SIM) region spans residues 730-737 (IIVLSDSD).

This sequence belongs to the DAXX family. Homomultimer. Interacts (via C-terminus) with TNFRSF6 (via death domain). Interacts with PAX5, SLC2A4/GLUT4, MAP3K5, TGFBR2, phosphorylated dimeric HSPB1/HSP27, CENPC, ETS1, sumoylated PML, UBE2I, MCRS1 and TP53. Interacts (via N-terminus) with HIPK2 and HIPK3. Interacts with HIPK1, which induces translocation from PML/POD/ND10 nuclear bodies to chromatin and enhances association with HDAC1. Interacts (non-phosphorylated) with PAX3, PAX7, DEK, HDAC1, HDAC2, HDAC3, acetylated histone H4 and histones H2A, H2B, H3, H3.3 and H4. Interacts with SPOP; mediating CUL3-dependent proteasomal degradation. Interacts with CBP; the interaction is dependent the sumoylation of CBP and suppresses CBP transcriptional activity via recruitment of HDAC2 directly in the complex with TP53 and HIPK2. Interacts with AXIN1; the interaction stimulates the interaction of DAXX with TP53, stimulates 'Ser-46' phosphorylation of TP53 on and induces cell death on UV irradiation. Interacts with MDM2; the interaction is direct. Interacts with USP7; the interaction is direct and independent of MDM2 and TP53. Part of a complex with DAXX, MDM2 and USP7 under non-stress conditions. Interacts (via N-terminus) with RASSF1 (via C-terminus); the interaction is independent of MDM2 and TP53; RASSF1 isoform A disrupts interactions among MDM2, DAXX and USP7, thus contributing to the efficient activation of TP53 by promoting MDM2 self-ubiquitination in cell-cycle checkpoint control in response to DNA damage. Interacts with ATRX to form the chromatin remodeling complex ATRX:DAXX. Interacts with HSF1 (via homotrimeric form preferentially); this interaction relieves homotrimeric HSF1 from repression of its transcriptional activity by HSP90-dependent multichaperone complex upon heat shock. Post-translationally, sumoylated with SUMO1 on multiple lysine residues. Polyubiquitinated; which is promoted by CUL3 and SPOP and results in proteasomal degradation. Ubiquitinated by MDM2; inducing its degradation. Deubiquitinated by USP7; leading to stabilize it.

Its subcellular location is the cytoplasm. The protein resides in the nucleus. It localises to the nucleoplasm. The protein localises to the PML body. It is found in the nucleolus. Its subcellular location is the chromosome. The protein resides in the centromere. Transcription corepressor known to repress transcriptional potential of several sumoylated transcription factors. Down-regulates basal and activated transcription. Its transcription repressor activity is modulated by recruiting it to subnuclear compartments like the nucleolus or PML/POD/ND10 nuclear bodies through interactions with MCSR1 and PML, respectively. Seems to regulate transcription in PML/POD/ND10 nuclear bodies together with PML and may influence TNFRSF6-dependent apoptosis thereby. Inhibits transcriptional activation of PAX3 and ETS1 through direct protein-protein interactions. Modulates PAX5 activity; the function seems to involve CREBBP. Acts as an adapter protein in a MDM2-DAXX-USP7 complex by regulating the RING-finger E3 ligase MDM2 ubiquitination activity. Under non-stress condition, in association with the deubiquitinating USP7, prevents MDM2 self-ubiquitination and enhances the intrinsic E3 ligase activity of MDM2 towards TP53, thereby promoting TP53 ubiquitination and subsequent proteasomal degradation. Upon DNA damage, its association with MDM2 and USP7 is disrupted, resulting in increased MDM2 autoubiquitination and consequently, MDM2 degradation, which leads to TP53 stabilization. Acts as a histone chaperone that facilitates deposition of histone H3.3. Acts as a targeting component of the chromatin remodeling complex ATRX:DAXX which has ATP-dependent DNA translocase activity and catalyzes the replication-independent deposition of histone H3.3 in pericentric DNA repeats outside S-phase and telomeres, and the in vitro remodeling of H3.3-containing nucleosomes. Does not affect the ATPase activity of ATRX but alleviates its transcription repression activity. Upon neuronal activation associates with regulatory elements of selected immediate early genes where it promotes deposition of histone H3.3 which may be linked to transcriptional induction of these genes. Required for the recruitment of histone H3.3:H4 dimers to PML-nuclear bodies (PML-NBs); the process is independent of ATRX and facilitated by ASF1A; PML-NBs are suggested to function as regulatory sites for the incorporation of newly synthesized histone H3.3 into chromatin. Proposed to mediate activation of the JNK pathway and apoptosis via MAP3K5 in response to signaling from TNFRSF6 and TGFBR2. Interaction with HSPB1/HSP27 may prevent interaction with TNFRSF6 and MAP3K5 and block DAXX-mediated apoptosis. In contrast, in lymphoid cells JNC activation and TNFRSF6-mediated apoptosis may not involve DAXX. Plays a role as a positive regulator of the heat shock transcription factor HSF1 activity during the stress protein response. The sequence is that of Death domain-associated protein 6 (DAXX) from Canis lupus familiaris (Dog).